A 407-amino-acid polypeptide reads, in one-letter code: uncharacterized protein (407 aa).

This is an uncharacterized protein from Saimiriine herpesvirus 2 (strain 11) (SaHV-2).